The chain runs to 192 residues: UPF0312 protein PFLU_5725 (192 aa).

The first 23 residues, 1 to 23 (MLKKTLAALAIGTALLSAGQVMA), serve as a signal peptide directing secretion.

It belongs to the UPF0312 family. Type 1 subfamily.

The protein localises to the periplasm. This chain is UPF0312 protein PFLU_5725, found in Pseudomonas fluorescens (strain SBW25).